Here is a 333-residue protein sequence, read N- to C-terminus: MSEKHLTYADSGVDITKEEKTVKTLIDKLSYVRKGIGAPLTGIGHYAGLLDFGEYALAMTTDGVGSKVLIANEMKRWNTVGIDCIAMNVNDLLAIGAEPVAFVDYLALEKHEEGFAAQIGEGLLKGAEISRMSIVGGETATLPDIIKGFDLAGTCLGVVKKEDILEGGKVRVGDVLVGIPSTGVHSNGYTLVRKIIEKSGYSYHDPCPYDSSKTIGDELLEPTRIYIEVLDVLKACEVHGLAHITGSGLLKLRRVTKLGFEFSDPIEPQEIFKFLQKEGEVEDLEMYRTFNMGMGFLMILPEKDAAKAAELTGGKIVGKIVESGIRVKDLIIE.

This sequence belongs to the AIR synthase family.

The protein localises to the cytoplasm. It carries out the reaction 2-formamido-N(1)-(5-O-phospho-beta-D-ribosyl)acetamidine + ATP = 5-amino-1-(5-phospho-beta-D-ribosyl)imidazole + ADP + phosphate + H(+). It participates in purine metabolism; IMP biosynthesis via de novo pathway; 5-amino-1-(5-phospho-D-ribosyl)imidazole from N(2)-formyl-N(1)-(5-phospho-D-ribosyl)glycinamide: step 2/2. The sequence is that of Phosphoribosylformylglycinamidine cyclo-ligase from Methanosarcina acetivorans (strain ATCC 35395 / DSM 2834 / JCM 12185 / C2A).